Consider the following 109-residue polypeptide: uncharacterized protein (109 aa).

Residues 75-95 form a helical membrane-spanning segment; sequence MALFHTVFILWPHFCGILWTV.

The protein localises to the membrane. This is an uncharacterized protein from Saccharomyces cerevisiae (strain ATCC 204508 / S288c) (Baker's yeast).